Here is a 235-residue protein sequence, read N- to C-terminus: 1-(5-phosphoribosyl)-5-[(5-phosphoribosylamino)methylideneamino] imidazole-4-carboxamide isomerase (235 aa).

The Proton acceptor role is filled by D8. Residue D128 is the Proton donor of the active site.

The protein belongs to the HisA/HisF family.

Its subcellular location is the cytoplasm. It carries out the reaction 1-(5-phospho-beta-D-ribosyl)-5-[(5-phospho-beta-D-ribosylamino)methylideneamino]imidazole-4-carboxamide = 5-[(5-phospho-1-deoxy-D-ribulos-1-ylimino)methylamino]-1-(5-phospho-beta-D-ribosyl)imidazole-4-carboxamide. It participates in amino-acid biosynthesis; L-histidine biosynthesis; L-histidine from 5-phospho-alpha-D-ribose 1-diphosphate: step 4/9. The protein is 1-(5-phosphoribosyl)-5-[(5-phosphoribosylamino)methylideneamino] imidazole-4-carboxamide isomerase of Thermus thermophilus (strain ATCC BAA-163 / DSM 7039 / HB27).